A 169-amino-acid chain; its full sequence is GSK-3-binding protein (169 aa).

The tract at residues 75 to 100 (TPRGAARHAQHHHHHSPRQQGTGGNK) is disordered. Positions 79–91 (AARHAQHHHHHSP) are enriched in basic residues. An involved in GSK-3 binding region spans residues 122 to 145 (DDPHELLQELLLSGNLIKEAVRRL). The disordered stretch occupies residues 147–169 (MAGESPDPPGSRRVSECTETTVQ).

It belongs to the GSK-3-binding protein family.

Functionally, binds GSK-3 and prevents GSK-3-dependent phosphorylation. Regulates the stability of beta-catenin in embryos. Maternal GBP is required for dorsal-ventral axis formation. This Xenopus laevis (African clawed frog) protein is GSK-3-binding protein (gbp).